A 116-amino-acid chain; its full sequence is Large ribosomal subunit protein bL19 (116 aa).

This sequence belongs to the bacterial ribosomal protein bL19 family.

Functionally, this protein is located at the 30S-50S ribosomal subunit interface and may play a role in the structure and function of the aminoacyl-tRNA binding site. In Pseudomonas fluorescens (strain Pf0-1), this protein is Large ribosomal subunit protein bL19.